We begin with the raw amino-acid sequence, 225 residues long: MNLIEFPSLDQTMPNSVISTTLNDLSNWSRLSSLWPLLYGTSCCFIEFAALIGSRFDFDRYGLVPRSSPRQADLILTAGTVTMKMAPSLVRLYEQMPEPKYVIAMGACTITGGMFSTDSYSTVRGVDKLIPVDVYLPGCPPKPEAVIDAITKLRKKISREIYEDRIGSKQENRCFTINHKFHVQRSIHTGNYNKELLYQSPSTSEITSEEFFRSKSSISSHKLVN.

Residues Cys-43, Cys-44, Cys-108, and Cys-139 each coordinate [4Fe-4S] cluster.

It belongs to the complex I 20 kDa subunit family. NDH is composed of at least 16 different subunits, 5 of which are encoded in the nucleus. [4Fe-4S] cluster serves as cofactor.

It is found in the plastid. The protein localises to the chloroplast thylakoid membrane. The catalysed reaction is a plastoquinone + NADH + (n+1) H(+)(in) = a plastoquinol + NAD(+) + n H(+)(out). It catalyses the reaction a plastoquinone + NADPH + (n+1) H(+)(in) = a plastoquinol + NADP(+) + n H(+)(out). Its function is as follows. NDH shuttles electrons from NAD(P)H:plastoquinone, via FMN and iron-sulfur (Fe-S) centers, to quinones in the photosynthetic chain and possibly in a chloroplast respiratory chain. The immediate electron acceptor for the enzyme in this species is believed to be plastoquinone. Couples the redox reaction to proton translocation, and thus conserves the redox energy in a proton gradient. This is NAD(P)H-quinone oxidoreductase subunit K, chloroplastic from Lemna minor (Common duckweed).